The primary structure comprises 1106 residues: Protein shuttle craft (1106 aa).

2 disordered regions span residues 7 to 26 (QLTN…AMAD) and 189 to 371 (PAAA…KLSQ). A compositionally biased stretch (low complexity) spans 189-201 (PAAATTNGNSTAS). 2 stretches are compositionally biased toward basic and acidic residues: residues 232-270 (NYER…RDSR) and 278-323 (RRSD…RDRI). T335 is subject to Phosphothreonine. Phosphoserine is present on residues S336, S339, S343, and S354. The span at 336-354 (SNESAHPSPEKQSQLQQIS) shows a compositional bias: polar residues. The RING-type; atypical zinc-finger motif lies at 386–433 (CLVCVEAIKSHQPTWSCRNCYHMLHLKCTITWASSSKSEVGWRCPACQ). 8 NF-X1-type zinc fingers span residues 474 to 492 (CSHA…PCQA), 527 to 546 (CGEH…ACSE), 585 to 604 (CGHH…PCKL), 644 to 667 (CGKP…PCPK), 706 to 725 (CGKH…DCPL), 733 to 752 (CGKH…PCYR), 844 to 867 (CGGH…ICRQ), and 876 to 896 (CGHK…PCKE). Residues 1006–1071 (TKSVYETLTD…NRNVVATAHK (66 aa)) form the R3H domain.

The protein belongs to the NFX1 family. As to expression, ovaries and embryonic central nervous system.

It localises to the nucleus. In terms of biological role, plays an essential role during the late stages of embryonic neurogenesis. May either fine-tune the guidance or the spatial maintenance of the migrating SNB and in nerve roots, which are composed of axons originating from distinct groups of motor neurons and may be required to either guide or maintain the position of these nerves along a direct and straight path to their ultimate targets in particular muscle fields. May play a role in egg chamber development and/or may confer essential maternal contributions to the early embryo. The protein is Protein shuttle craft (stc) of Drosophila melanogaster (Fruit fly).